A 100-amino-acid polypeptide reads, in one-letter code: MKLTPRERDKLLIFTAALLAERRRARGLKLNYPEAVALITAALMEAARDGKTVAEVMHYGTTLLTRDDVMEGVPEMIPDIQVEATFPDGTKLVTVHHPIP.

It belongs to the urease gamma subunit family. In terms of assembly, heterotrimer of UreA (gamma), UreB (beta) and UreC (alpha) subunits. Three heterotrimers associate to form the active enzyme.

It is found in the cytoplasm. The catalysed reaction is urea + 2 H2O + H(+) = hydrogencarbonate + 2 NH4(+). It participates in nitrogen metabolism; urea degradation; CO(2) and NH(3) from urea (urease route): step 1/1. This is Urease subunit gamma from Paraburkholderia phymatum (strain DSM 17167 / CIP 108236 / LMG 21445 / STM815) (Burkholderia phymatum).